Consider the following 197-residue polypeptide: Nucleoid occlusion factor SlmA (197 aa).

One can recognise an HTH tetR-type domain in the interval 7-67; sequence INRREHILQC…GLIEFIEDAI (61 aa). Positions 30–49 form a DNA-binding region, H-T-H motif; the sequence is TTAKLAAEVGVSEAALYRHF. Residues 110 to 130 are a coiled coil; it reads ALLGENERLRSRIDVLFAKIE.

Belongs to the nucleoid occlusion factor SlmA family. Homodimer. Interacts with FtsZ.

It localises to the cytoplasm. Its subcellular location is the nucleoid. Required for nucleoid occlusion (NO) phenomenon, which prevents Z-ring formation and cell division over the nucleoid. Acts as a DNA-associated cell division inhibitor that binds simultaneously chromosomal DNA and FtsZ, and disrupts the assembly of FtsZ polymers. SlmA-DNA-binding sequences (SBS) are dispersed on non-Ter regions of the chromosome, preventing FtsZ polymerization at these regions. This Shewanella frigidimarina (strain NCIMB 400) protein is Nucleoid occlusion factor SlmA.